The chain runs to 514 residues: tRNA-2-methylthio-N(6)-dimethylallyladenosine synthase (514 aa).

Residues 1-21 (MNEEQRKASSVDVLAERDKKA) are disordered. The MTTase N-terminal domain maps to 68-186 (RTFLIKTYGC…LPEILEEAYL (119 aa)). [4Fe-4S] cluster-binding residues include Cys-77, Cys-113, Cys-147, Cys-223, Cys-227, and Cys-230. The Radical SAM core domain occupies 209–440 (REGNIKAWVN…KKVGHYSQIA (232 aa)). The region spanning 442–505 (SKYEGQTVTV…QYSLNGSFVK (64 aa)) is the TRAM domain.

This sequence belongs to the methylthiotransferase family. MiaB subfamily. As to quaternary structure, monomer. The cofactor is [4Fe-4S] cluster.

It localises to the cytoplasm. It carries out the reaction N(6)-dimethylallyladenosine(37) in tRNA + (sulfur carrier)-SH + AH2 + 2 S-adenosyl-L-methionine = 2-methylsulfanyl-N(6)-dimethylallyladenosine(37) in tRNA + (sulfur carrier)-H + 5'-deoxyadenosine + L-methionine + A + S-adenosyl-L-homocysteine + 2 H(+). Functionally, catalyzes the methylthiolation of N6-(dimethylallyl)adenosine (i(6)A), leading to the formation of 2-methylthio-N6-(dimethylallyl)adenosine (ms(2)i(6)A) at position 37 in tRNAs that read codons beginning with uridine. The sequence is that of tRNA-2-methylthio-N(6)-dimethylallyladenosine synthase from Staphylococcus aureus (strain N315).